A 202-amino-acid chain; its full sequence is Ribosomal RNA small subunit methyltransferase G (202 aa).

S-adenosyl-L-methionine is bound by residues Gly-75, Phe-80, 125-126 (VQ), and Arg-139.

Belongs to the methyltransferase superfamily. RNA methyltransferase RsmG family.

Its subcellular location is the cytoplasm. In terms of biological role, specifically methylates the N7 position of a guanine in 16S rRNA. This Mesomycoplasma hyopneumoniae (strain 7448) (Mycoplasma hyopneumoniae) protein is Ribosomal RNA small subunit methyltransferase G.